The primary structure comprises 151 residues: Probable transcriptional regulator syrB2 (151 aa).

The interval 1–61 (MADESNTGSI…PRRYSEQQRK (61 aa)) is disordered. Low complexity predominate over residues 11–23 (AAAVAPNADVKAP). A compositionally biased stretch (basic residues) spans 24-35 (AAKKKRSPRRQK).

It belongs to the SyrB family.

Its function is as follows. Seems to affect the transcription of cya3. May be negatively autoregulated. This chain is Probable transcriptional regulator syrB2 (syrB2), found in Rhizobium meliloti (strain 1021) (Ensifer meliloti).